Consider the following 555-residue polypeptide: Dihydroxy-acid dehydratase (555 aa).

Position 78 (D78) interacts with Mg(2+). Residue C119 participates in [2Fe-2S] cluster binding. Mg(2+) contacts are provided by D120 and K121. K121 is subject to N6-carboxylysine. C191 contributes to the [2Fe-2S] cluster binding site. Residue E444 participates in Mg(2+) binding. S470 functions as the Proton acceptor in the catalytic mechanism.

It belongs to the IlvD/Edd family. As to quaternary structure, homodimer. The cofactor is [2Fe-2S] cluster. Mg(2+) is required as a cofactor.

The catalysed reaction is (2R)-2,3-dihydroxy-3-methylbutanoate = 3-methyl-2-oxobutanoate + H2O. It carries out the reaction (2R,3R)-2,3-dihydroxy-3-methylpentanoate = (S)-3-methyl-2-oxopentanoate + H2O. It participates in amino-acid biosynthesis; L-isoleucine biosynthesis; L-isoleucine from 2-oxobutanoate: step 3/4. It functions in the pathway amino-acid biosynthesis; L-valine biosynthesis; L-valine from pyruvate: step 3/4. Functions in the biosynthesis of branched-chain amino acids. Catalyzes the dehydration of (2R,3R)-2,3-dihydroxy-3-methylpentanoate (2,3-dihydroxy-3-methylvalerate) into 2-oxo-3-methylpentanoate (2-oxo-3-methylvalerate) and of (2R)-2,3-dihydroxy-3-methylbutanoate (2,3-dihydroxyisovalerate) into 2-oxo-3-methylbutanoate (2-oxoisovalerate), the penultimate precursor to L-isoleucine and L-valine, respectively. The polypeptide is Dihydroxy-acid dehydratase (Maridesulfovibrio salexigens (strain ATCC 14822 / DSM 2638 / NCIMB 8403 / VKM B-1763) (Desulfovibrio salexigens)).